A 186-amino-acid chain; its full sequence is MDDERGKLAVYPGTFDPLTMGHVSLIRRGRQIFDRVIVAVAMDTPKTPLFSLDERVRMAEEVFADHEGITVEPFSGLLVDYAERRGANVILRGLRAVSDFEYEFQLALMNRKLKRHVQTVFLMTDYQWLYISSTIIKAAASLGGDIKGLVPDNVYRRLREKYGYPYPLNPGLALSTEADEDLPPSL.

Thr-14 is a binding site for substrate. ATP is bound by residues 14–15 (TF) and His-22. The substrate site is built by Lys-46, Leu-78, and Arg-92. Residues 93–95 (GLR), Glu-103, and 128–134 (WLYISST) each bind ATP.

It belongs to the bacterial CoaD family. In terms of assembly, homohexamer. Mg(2+) is required as a cofactor.

It localises to the cytoplasm. It catalyses the reaction (R)-4'-phosphopantetheine + ATP + H(+) = 3'-dephospho-CoA + diphosphate. The protein operates within cofactor biosynthesis; coenzyme A biosynthesis; CoA from (R)-pantothenate: step 4/5. Its function is as follows. Reversibly transfers an adenylyl group from ATP to 4'-phosphopantetheine, yielding dephospho-CoA (dPCoA) and pyrophosphate. The sequence is that of Phosphopantetheine adenylyltransferase from Nitratidesulfovibrio vulgaris (strain ATCC 29579 / DSM 644 / CCUG 34227 / NCIMB 8303 / VKM B-1760 / Hildenborough) (Desulfovibrio vulgaris).